The chain runs to 225 residues: Small ribosomal subunit protein eS1 (225 aa).

The protein belongs to the eukaryotic ribosomal protein eS1 family.

This chain is Small ribosomal subunit protein eS1, found in Methanococcus maripaludis (strain DSM 14266 / JCM 13030 / NBRC 101832 / S2 / LL).